The chain runs to 185 residues: Adenine phosphoribosyltransferase (185 aa).

This sequence belongs to the purine/pyrimidine phosphoribosyltransferase family. Homodimer.

It localises to the cytoplasm. The catalysed reaction is AMP + diphosphate = 5-phospho-alpha-D-ribose 1-diphosphate + adenine. Its pathway is purine metabolism; AMP biosynthesis via salvage pathway; AMP from adenine: step 1/1. In terms of biological role, catalyzes a salvage reaction resulting in the formation of AMP, that is energically less costly than de novo synthesis. The protein is Adenine phosphoribosyltransferase of Aliarcobacter butzleri (strain RM4018) (Arcobacter butzleri).